The sequence spans 158 residues: Glycine/sarcosine/betaine reductase complex component A (158 aa).

Sec-44 is a catalytic residue. A non-standard amino acid (selenocysteine) is located at residue Sec-44.

Belongs to the GrdA family. As to quaternary structure, monomer. Component of the glycine, sarcosine and betaine reductase complexes, together with components B and C.

It catalyses the reaction acetyl phosphate + [thioredoxin]-disulfide + NH4(+) + H2O = [thioredoxin]-dithiol + glycine + phosphate + H(+). The catalysed reaction is acetyl phosphate + methylamine + [thioredoxin]-disulfide + H2O = sarcosine + [thioredoxin]-dithiol + phosphate + H(+). It carries out the reaction acetyl phosphate + trimethylamine + [thioredoxin]-disulfide + H2O = glycine betaine + [thioredoxin]-dithiol + phosphate + H(+). Functionally, in the first step of glycine, betaine and sarcosine reductases, the substrate is bound to component PB via a Schiff base intermediate. Then the PB-activated substrate is nucleophilically attacked by the selenol anion of component PA to transform it to a carboxymethylated selenoether and the respective amine. By action of component PC, acetyl phosphate is formed, leaving component PA in its oxidized state. Finally component PA becomes reduced by the thioredoxin system to start a new catalytic cycle of reductive deamination. The protein is Glycine/sarcosine/betaine reductase complex component A of Clostridium botulinum (strain ATCC 19397 / Type A).